Here is a 503-residue protein sequence, read N- to C-terminus: Cytochrome P450 3A12 (503 aa).

C442 contributes to the heme binding site.

This sequence belongs to the cytochrome P450 family. It depends on heme as a cofactor.

It localises to the endoplasmic reticulum membrane. The protein localises to the microsome membrane. The enzyme catalyses an organic molecule + reduced [NADPH--hemoprotein reductase] + O2 = an alcohol + oxidized [NADPH--hemoprotein reductase] + H2O + H(+). Its function is as follows. Cytochromes P450 are a group of heme-thiolate monooxygenases. In liver microsomes, this enzyme is involved in an NADPH-dependent electron transport pathway. It oxidizes a variety of structurally unrelated compounds, including steroids, fatty acids, and xenobiotics. This Canis lupus familiaris (Dog) protein is Cytochrome P450 3A12 (CYP3A12).